Consider the following 1393-residue polypeptide: DNA-directed RNA polymerase subunit beta' (1393 aa).

Zn(2+)-binding residues include cysteine 71, cysteine 73, cysteine 86, and cysteine 89. Mg(2+)-binding residues include aspartate 462, aspartate 464, and aspartate 466. The Zn(2+) site is built by cysteine 811, cysteine 885, cysteine 892, and cysteine 895.

The protein belongs to the RNA polymerase beta' chain family. As to quaternary structure, the RNAP catalytic core consists of 2 alpha, 1 beta, 1 beta' and 1 omega subunit. When a sigma factor is associated with the core the holoenzyme is formed, which can initiate transcription. It depends on Mg(2+) as a cofactor. Zn(2+) is required as a cofactor.

It catalyses the reaction RNA(n) + a ribonucleoside 5'-triphosphate = RNA(n+1) + diphosphate. In terms of biological role, DNA-dependent RNA polymerase catalyzes the transcription of DNA into RNA using the four ribonucleoside triphosphates as substrates. This chain is DNA-directed RNA polymerase subunit beta', found in Azorhizobium caulinodans (strain ATCC 43989 / DSM 5975 / JCM 20966 / LMG 6465 / NBRC 14845 / NCIMB 13405 / ORS 571).